Here is a 218-residue protein sequence, read N- to C-terminus: Glutathione S-transferase class-mu 26 kDa isozyme 51 (218 aa).

Residues 2 to 83 (PAKLGYWKIR…YIADKHGMLG (82 aa)) form the GST N-terminal domain. Glutathione is bound by residues 7–8 (YW), 41–45 (WFGDK), 54–55 (NL), and 67–68 (QS). The GST C-terminal domain maps to 85 to 203 (TPEERARISM…ESEKFIKWPL (119 aa)). Tyr111 provides a ligand contact to substrate.

Belongs to the GST superfamily. Mu family. Homodimer.

The protein localises to the cytoplasm. The enzyme catalyses RX + glutathione = an S-substituted glutathione + a halide anion + H(+). Conjugation of reduced glutathione to a wide number of exogenous and endogenous hydrophobic electrophiles. In terms of biological role, GST isoenzymes appear to play a central role in the parasite detoxification system. Other functions are also suspected including a role in increasing the solubility of haematin in the parasite gut. The chain is Glutathione S-transferase class-mu 26 kDa isozyme 51 from Fasciola hepatica (Liver fluke).